Reading from the N-terminus, the 251-residue chain is Flap endonuclease Xni (251 aa).

Mg(2+) is bound at residue aspartate 104. The 5'-3' exonuclease domain occupies 160-250 (VQPQQLPDYW…DGNLQQLRLK (91 aa)). 5 residues coordinate K(+): leucine 171, alanine 172, proline 180, valine 182, and isoleucine 185. Positions 184–189 (GIGPKS) are interaction with DNA.

This sequence belongs to the Xni family. Requires Mg(2+) as cofactor. K(+) serves as cofactor.

Has flap endonuclease activity. During DNA replication, flap endonucleases cleave the 5'-overhanging flap structure that is generated by displacement synthesis when DNA polymerase encounters the 5'-end of a downstream Okazaki fragment. This chain is Flap endonuclease Xni, found in Escherichia fergusonii (strain ATCC 35469 / DSM 13698 / CCUG 18766 / IAM 14443 / JCM 21226 / LMG 7866 / NBRC 102419 / NCTC 12128 / CDC 0568-73).